The sequence spans 100 residues: Integration host factor subunit beta (100 aa).

The interval 53-100 (LHHRPPRIGRNPKTGEPVALPGKYVPHFKPGKELRDRVNAGRHNPIQS) is disordered. The span at 82–91 (PGKELRDRVN) shows a compositional bias: basic and acidic residues.

This sequence belongs to the bacterial histone-like protein family. Heterodimer of an alpha and a beta chain.

In terms of biological role, this protein is one of the two subunits of integration host factor, a specific DNA-binding protein that functions in genetic recombination as well as in transcriptional and translational control. The sequence is that of Integration host factor subunit beta from Alkalilimnicola ehrlichii (strain ATCC BAA-1101 / DSM 17681 / MLHE-1).